We begin with the raw amino-acid sequence, 393 residues long: 1-deoxy-D-xylulose 5-phosphate reductoisomerase (393 aa).

NADPH is bound by residues Thr13, Gly14, Ser15, Ile16, and Asn128. Lys129 contributes to the 1-deoxy-D-xylulose 5-phosphate binding site. Glu130 lines the NADPH pocket. Residue Asp154 participates in Mn(2+) binding. Ser155, Glu156, Ser178, and His201 together coordinate 1-deoxy-D-xylulose 5-phosphate. Glu156 provides a ligand contact to Mn(2+). Gly207 is a binding site for NADPH. 1-deoxy-D-xylulose 5-phosphate-binding residues include Ser214, Asn219, Lys220, and Glu223. Residue Glu223 participates in Mn(2+) binding.

This sequence belongs to the DXR family. Mg(2+) is required as a cofactor. Requires Mn(2+) as cofactor.

It carries out the reaction 2-C-methyl-D-erythritol 4-phosphate + NADP(+) = 1-deoxy-D-xylulose 5-phosphate + NADPH + H(+). Its pathway is isoprenoid biosynthesis; isopentenyl diphosphate biosynthesis via DXP pathway; isopentenyl diphosphate from 1-deoxy-D-xylulose 5-phosphate: step 1/6. Its function is as follows. Catalyzes the NADPH-dependent rearrangement and reduction of 1-deoxy-D-xylulose-5-phosphate (DXP) to 2-C-methyl-D-erythritol 4-phosphate (MEP). This is 1-deoxy-D-xylulose 5-phosphate reductoisomerase from Acidithiobacillus ferrooxidans (strain ATCC 23270 / DSM 14882 / CIP 104768 / NCIMB 8455) (Ferrobacillus ferrooxidans (strain ATCC 23270)).